The sequence spans 204 residues: Inositol diphosphatase DSP2 (204 aa).

The interval 1–27 is disordered; that stretch reads MQLEISPRQRSQQQKEEEGEHQQRAGE. Basic and acidic residues predominate over residues 13 to 27; it reads QQKEEEGEHQQRAGE. Positions 51–203 constitute a Tyrosine-protein phosphatase domain; it reads NFAEVNDGIF…SSLMHLTASQ (153 aa). The interval 107–119 is WPD loop important for active site topology; the sequence is FGIDGSKELLVNI. Asparagine 118, isoleucine 119, and lysine 123 together coordinate 1D-myo-inositol hexakisphosphate. The active-site Phosphocysteine intermediate is cysteine 143.

This sequence belongs to the protein-tyrosine phosphatase family. Atypical dual-specificity phosphatase Siw14-like subfamily. In terms of tissue distribution, expressed in roots and young panicles.

The protein resides in the cytoplasm. It localises to the nucleus. It carries out the reaction 5-diphospho-1D-myo-inositol 1,2,3,4,6-pentakisphosphate + H2O = 1D-myo-inositol hexakisphosphate + phosphate + H(+). The enzyme catalyses 1,5-bis(diphospho)-1D-myo-inositol 2,3,4,6-tetrakisphosphate + H2O = 1-diphospho-1D-myo-inositol 2,3,4,5,6-pentakisphosphate + phosphate + 2 H(+). The catalysed reaction is 3,5-bis(diphospho)-1D-myo-inositol 1,2,4,6-tetrakisphosphate + H2O = 3-diphospho-1D-myo-inositol 1,2,4,5,6-pentakisphosphate + phosphate + 2 H(+). It catalyses the reaction 6-diphospho-1D-myo-inositol pentakisphosphate + H2O = 1D-myo-inositol hexakisphosphate + phosphate + H(+). Functionally, cleaves the beta-phosphate at the 5-position of soluble inositol pyrophosphates. Has highest activity on 5-diphosphoinositol 1,2,3,4,6-pentakisphosphate (5-InsP(7)). Acts as a negative regulator of defense responses against the fungal pathogen Magnaporthe oryzae. This chain is Inositol diphosphatase DSP2, found in Oryza sativa subsp. japonica (Rice).